The sequence spans 198 residues: Protein GrpE (198 aa).

Residues M1 to K14 are compositionally biased toward basic and acidic residues. Residues M1 to E20 form a disordered region.

It belongs to the GrpE family. In terms of assembly, homodimer.

The protein localises to the cytoplasm. Participates actively in the response to hyperosmotic and heat shock by preventing the aggregation of stress-denatured proteins, in association with DnaK and GrpE. It is the nucleotide exchange factor for DnaK and may function as a thermosensor. Unfolded proteins bind initially to DnaJ; upon interaction with the DnaJ-bound protein, DnaK hydrolyzes its bound ATP, resulting in the formation of a stable complex. GrpE releases ADP from DnaK; ATP binding to DnaK triggers the release of the substrate protein, thus completing the reaction cycle. Several rounds of ATP-dependent interactions between DnaJ, DnaK and GrpE are required for fully efficient folding. The chain is Protein GrpE from Vibrio vulnificus (strain YJ016).